The chain runs to 1047 residues: Error-prone DNA polymerase (1047 aa).

It belongs to the DNA polymerase type-C family. DnaE2 subfamily.

It is found in the cytoplasm. The catalysed reaction is DNA(n) + a 2'-deoxyribonucleoside 5'-triphosphate = DNA(n+1) + diphosphate. Its function is as follows. DNA polymerase involved in damage-induced mutagenesis and translesion synthesis (TLS). It is not the major replicative DNA polymerase. This Methylococcus capsulatus (strain ATCC 33009 / NCIMB 11132 / Bath) protein is Error-prone DNA polymerase.